The sequence spans 38 residues: uncharacterized protein (38 aa).

The helical transmembrane segment at 10–32 (FSLLWYFLVGGGKGEVCWRFLGI) threads the bilayer.

It is found in the membrane. This is an uncharacterized protein from Saccharomyces cerevisiae (strain ATCC 204508 / S288c) (Baker's yeast).